We begin with the raw amino-acid sequence, 125 residues long: Large ribosomal subunit protein bL12 (125 aa).

This sequence belongs to the bacterial ribosomal protein bL12 family. In terms of assembly, homodimer. Part of the ribosomal stalk of the 50S ribosomal subunit. Forms a multimeric L10(L12)X complex, where L10 forms an elongated spine to which 2 to 4 L12 dimers bind in a sequential fashion. Binds GTP-bound translation factors.

Functionally, forms part of the ribosomal stalk which helps the ribosome interact with GTP-bound translation factors. Is thus essential for accurate translation. This Azorhizobium caulinodans (strain ATCC 43989 / DSM 5975 / JCM 20966 / LMG 6465 / NBRC 14845 / NCIMB 13405 / ORS 571) protein is Large ribosomal subunit protein bL12.